We begin with the raw amino-acid sequence, 174 residues long: Pectinesterase inhibitor 12 (174 aa).

The first 20 residues, 1–20, serve as a signal peptide directing secretion; it reads MKFLVSLVIFSLFLNGFATA. Disulfide bonds link Cys28/Cys43 and Cys100/Cys140. Asn129 carries an N-linked (GlcNAc...) asparagine glycan.

The protein belongs to the PMEI family.

Its subcellular location is the secreted. It localises to the extracellular space. The protein resides in the apoplast. Pectin methylesterase (PME) inhibitor involved in the maintenance of cell wall integrity in response to necrotrophic pathogens. Modulates PME activity and pectin methylesterification during infection by Botrytis cinerea and contributes to resistance against the pathogen. The sequence is that of Pectinesterase inhibitor 12 from Arabidopsis thaliana (Mouse-ear cress).